Reading from the N-terminus, the 79-residue chain is Small ribosomal subunit protein bS18B (79 aa).

This sequence belongs to the bacterial ribosomal protein bS18 family. Part of the 30S ribosomal subunit. Forms a tight heterodimer with protein bS6.

Its function is as follows. Binds as a heterodimer with protein bS6 to the central domain of the 16S rRNA, where it helps stabilize the platform of the 30S subunit. This chain is Small ribosomal subunit protein bS18B, found in Mycolicibacterium gilvum (strain PYR-GCK) (Mycobacterium gilvum (strain PYR-GCK)).